Here is a 473-residue protein sequence, read N- to C-terminus: MSFKVAIVGRPNVGKSTLFNRLVGKKLALVDDTPGVTRDRREGEARLGDLSFTIIDTAGLEEAATGTLEARMRIGTERAIADADLCLLLIDARAGVTPLDKSFSQILRKSPTPVILAANKCEGGAGKAGRMEAYELGLGAPLPLSAEHGEGLGDLYDALAQFAKGLEADDAGQAVEDALAEEQDADAGFDPDAPYEPDLEAPLRVAIIGRPNVGKSTLVNQLLGEDRMLTGPEAGITRDSIGIEWEWRGRRVKLWDTAGMRRRARVTEKLEKLSVADTLRAVRFAEVVVILLDATQPFERQDLHIADLVEQEGRGLLIVVNKWDMVAEPQEVLRVLKEELERLLPQIRGVPIVTLSALTGRGTDKLMPAIERVHTFWNARVPTARLNRWMQEAVSRHQPPAAHGRPVNLKYISQVKSRPPTFAVFSSRADDVPTSYRRYLVNGLRETFDLPGVPIRLFMRKTHNPYADRKKRS.

EngA-type G domains follow at residues 3–167 (FKVA…KGLE) and 203–378 (LRVA…TFWN). Residues 9–16 (GRPNVGKS), 56–60 (DTAGL), 119–122 (NKCE), 209–216 (GRPNVGKS), 256–260 (DTAGM), and 321–324 (NKWD) each bind GTP. The KH-like domain maps to 379 to 463 (ARVPTARLNR…PIRLFMRKTH (85 aa)).

Belongs to the TRAFAC class TrmE-Era-EngA-EngB-Septin-like GTPase superfamily. EngA (Der) GTPase family. Associates with the 50S ribosomal subunit.

In terms of biological role, GTPase that plays an essential role in the late steps of ribosome biogenesis. The sequence is that of GTPase Der from Parvibaculum lavamentivorans (strain DS-1 / DSM 13023 / NCIMB 13966).